The following is a 326-amino-acid chain: Intracellular serine protease (326 aa).

The Peptidase S8 domain maps to 23–303; it reads PRGVEMIQAP…NGLLYLTAVE (281 aa). Residues D49, H86, and S244 each act as charge relay system in the active site.

This sequence belongs to the peptidase S8 family.

In terms of biological role, involved in the generation of beta- and alpha-amylases from the large amylase precursor. In Paenibacillus polymyxa (Bacillus polymyxa), this protein is Intracellular serine protease (isp).